A 512-amino-acid polypeptide reads, in one-letter code: MIKRLFCSINKNKIINEPPKLSIIKDTIYNLSSGVGKSGVAIIRVSGPQAETVIRKLIKKSDVDKNEEIKSRYATLSTFYNPKTNEQLDKGMFIWFPSPNSFTGEDVVEFHIHGGRAVIYETMEAIGLIEGTRPSEQGEFTKRAFENGKMDLTQVEGLSDLLDASTSFQKKIALKQMQGSISEFYLSLRKDLIRASAYMEAFIDFGDDAELDPEIVDQSRNRIISIRDKIQQHLNDGKRGERLRDGANIAIVGPPNAGKSSLINLLTNRKASIVSPIAGTTRDIVEVILDIDGYPVIIGDTAGLRNSTNDQIEIEGIEMAKDRFNNSDIKLFLFDSFNLFSQLNQNQNLNSSFNFNEEIKNLFNFIDNETIIIFNKSDLLKQFDNLKEWENLKLNLLDNIKKSNNLNSIQSIEISCNNNENIKDLLNLLKLNLKNLFEIQDKESPLLTRLRYKQHLSDCVESLDRYLYYCEHDVVLASEELRSAILSISEITHSVNIDDLLDIIFKDFCIGK.

In terms of domain architecture, TrmE-type G spans 246 to 434; the sequence is GANIAIVGPP…LLNLLKLNLK (189 aa). GTP is bound by residues 253–260, 300–304, and 375–378; these read GPPNAGKS, DTAGL, and NKSD.

It belongs to the TRAFAC class TrmE-Era-EngA-EngB-Septin-like GTPase superfamily. TrmE GTPase family.

The protein localises to the mitochondrion. Functionally, GTPase involved in the 5-carboxymethylaminomethyl modification (mnm(5)s(2)U34) of the wobble uridine base in mitochondrial tRNAs. In Dictyostelium discoideum (Social amoeba), this protein is tRNA modification GTPase gtpbp3, mitochondrial (gtpbp3).